Consider the following 101-residue polypeptide: MIEKIVKESEKGILIDIEVTTNAKKNEIGKINEWRKRIEIRIKEQPIEGKANKAIMKFLKGIFKSEILINSGTTSAQKTVLIPDKTKDDIVKILKKEIKSI.

It belongs to the UPF0235 family.

The chain is UPF0235 protein MmarC5_0538 from Methanococcus maripaludis (strain C5 / ATCC BAA-1333).